Here is a 168-residue protein sequence, read N- to C-terminus: Transcription antitermination protein NusB (168 aa).

Belongs to the NusB family.

Its function is as follows. Involved in transcription antitermination. Required for transcription of ribosomal RNA (rRNA) genes. Binds specifically to the boxA antiterminator sequence of the ribosomal RNA (rrn) operons. The sequence is that of Transcription antitermination protein NusB from Chlamydia trachomatis serovar D (strain ATCC VR-885 / DSM 19411 / UW-3/Cx).